A 79-amino-acid polypeptide reads, in one-letter code: NADH-ubiquinone oxidoreductase chain 4 (79 aa).

A run of 2 helical transmembrane segments spans residues 24–44 (SYTL…LANI) and 54–74 (LLIN…WFLL).

It belongs to the complex I subunit 4 family.

The protein localises to the mitochondrion membrane. The catalysed reaction is a ubiquinone + NADH + 5 H(+)(in) = a ubiquinol + NAD(+) + 4 H(+)(out). Functionally, core subunit of the mitochondrial membrane respiratory chain NADH dehydrogenase (Complex I) that is believed to belong to the minimal assembly required for catalysis. Complex I functions in the transfer of electrons from NADH to the respiratory chain. The immediate electron acceptor for the enzyme is believed to be ubiquinone. In Simulium vittatum (Striped black fly), this protein is NADH-ubiquinone oxidoreductase chain 4 (ND4).